The following is a 1226-amino-acid chain: MTGAPWYHRDISRVRAEELLAHAGIDGSFLVRDSESVPGAYALCLLFQRHVHTYRILPDADGLLAVQATQGVQVNCFRTLGDLVLGYQNPNKGLVAPLLYPVMRESEANDESSDGDDEKPGSTFANSPPRAISPTATSPPSSSAAPHLLLQRLQELSPNSVGCEIVSLLDEYLHGNVCKDLENLKGGASGLQHFQGILSHICDSLHSEIDQTLSSLETLAKVFDHPSGHLTFSTMQNIGKSPEENMDNLLQKLTTLCNLLSSLEKRVLKALQEAVANHNLSLQPATPPESSRAPKKLARPNPVHSFQVKVVRYGRQTVSVDINEGVLLFDKKSGSFGVETVTLDRIVQLVKFQRGPAKLKMVVDSHHNPPRELVFESTKKREAFCRLLQLMKTTHSQKSELDVISVFVGTWNMGGTPPPGSLQSWVTCSGLGLTPDESISSLPHDIYAVGTQDNPQGEREWAEHIRATLRTSTNIDYKQVAVQSLWNIRLAVFVKPEHEARISQVNTASVKTGLGNTLGNKGAVGVSLLFNGTSMGFVNCHLTSGSDKALRRNHNFQDILRLLSLGEKQLSTFDISLRFNHLFWCGDLNYRLDLDALDILKHVSKREFEELMCADQLTRERHKRKAFFNFKEEKIMFPPTYRYERGSRDCYLWQKYKSSGVQVNGPSWCDRVLWKSYPESHVICTSYGCTDDIFTSEHSPVFATFEVGVISLFPRTESCSERASIELEAIEAIVKTSSKAKFFIEFHSRCLEEPRRSAENDSQYCEVPGFLKLGWSSKQLPKLHPVFSDLEHLRDQHLLLSVKSCDGFESYGECCVALRPTAGKLLDTFETCLTHRGEEMGSIRGRFRVYVPPDRRRIRERVYEWLSIEKDEREMMKDQLSPPSSSAFSIKAPSASYVASPNSYTNPAYFIFEEMPVFRKAEEIPSTIKESQVVCANNTVIQLPRVTGSHGHGKRSARRSDFTEIEIPGSLAPYKPSCETQSELSSAASSYQLFPGPHVPSTSPNQRHTTHSSNSSLQLQSHKNNMAPDSELSGKKLTNSYMNHSVFSRDMHKEKVRQDYQGVHQGRPVPIRNGPKLYPYVSTRVPAQCSASWIVEQPTPASGDNSLTALQIAKSLSEVDFQPADKKYPFHQMPSQQRQHGYDYGLASERNYSWEKEVSVLHGAPETVRELLSTLGLQRYTLDLSRSGWDDLDYFSGITEEELCAAGVSNPSHRRRILENLPKIWD.

In terms of domain architecture, SH2 spans 6-102 (WYHRDISRVR…GLVAPLLYPV (97 aa)). Residues 106–144 (SEANDESSDGDDEKPGSTFANSPPRAISPTATSPPSSSA) are disordered. The span at 108 to 117 (ANDESSDGDD) shows a compositional bias: acidic residues. The segment covering 127–144 (SPPRAISPTATSPPSSSA) has biased composition (low complexity). The NPXY motif signature appears at 906–909 (NPAY). A Phosphotyrosine modification is found at Y909. Disordered regions lie at residues 945–964 (RVTG…DFTE) and 985–1035 (SSAA…LSGK). Residues 1011-1025 (HSSNSSLQLQSHKNN) are compositionally biased toward low complexity. Positions 1163 to 1226 (GAPETVRELL…ILENLPKIWD (64 aa)) constitute an SAM domain.

Belongs to the inositol 1,4,5-trisphosphate 5-phosphatase family. Post-translationally, tyrosine phosphorylated by the members of the SRC family after exposure to a diverse array of extracellular stimuli.

The protein resides in the cytoplasm. Its subcellular location is the cytosol. It is found in the cytoskeleton. The protein localises to the membrane. It localises to the cell projection. The protein resides in the filopodium. Its subcellular location is the lamellipodium. It is found in the nucleus. The protein localises to the nucleus speckle. It carries out the reaction a 1,2-diacyl-sn-glycero-3-phospho-(1D-myo-inositol-3,4,5-trisphosphate) + H2O = a 1,2-diacyl-sn-glycero-3-phospho-(1D-myo-inositol-3,4-bisphosphate) + phosphate. Phosphatidylinositol (PtdIns) phosphatase that specifically hydrolyzes the 5-phosphate of phosphatidylinositol-3,4,5-trisphosphate (PtdIns(3,4,5)P3) to produce PtdIns(3,4)P2, thereby negatively regulating the PI3K (phosphoinositide 3-kinase) pathways. Plays a central role in regulation of PI3K-dependent insulin signaling, although the precise molecular mechanisms and signaling pathways remain unclear. Part of a signaling pathway that regulates actin cytoskeleton remodeling. Required for the maintenance and dynamic remodeling of actin structures as well as in endocytosis, having a major impact on ligand-induced EGFR internalization and degradation. Participates in regulation of cortical and submembraneous actin. Regulates cell adhesion and cell spreading. Acts as a negative regulator of the FC-gamma-RIIA receptor (FCGR2A). Mediates signaling from the FC-gamma-RIIB receptor (FCGR2B), playing a central role in terminating signal transduction from activating immune/hematopoietic cell receptor systems. May also hydrolyze PtdIns(1,3,4,5)P4, and could thus affect the levels of the higher inositol polyphosphates like InsP6. The protein is Phosphatidylinositol 3,4,5-trisphosphate 5-phosphatase 2B (inppl1b) of Danio rerio (Zebrafish).